A 135-amino-acid chain; its full sequence is MNPLVYFSSQSENTHRFISRVGLPALRIPIATEQPALKVDRPYILVVPSYGGGSTKGAVPRQVIIFLNDPHNRAYLRGVIAAGNTNFGAAYCIAGDIIAQKCQVPYLYRFELLGTAEDVANVRKGVTEFWQQQTT.

The protein belongs to the NrdI family.

Probably involved in ribonucleotide reductase function. The chain is Protein NrdI from Pectobacterium carotovorum subsp. carotovorum (strain PC1).